The chain runs to 200 residues: MRLTAKQITWLKVALHLAAFLPLVWLFYAASQGLFRADPAKDIQHFTGRMALKLLLATLLVTPLTRLLKQPLLIRTRRLLGLWCFAWATLHLVSYSLLELGLSNLSLLGSELVSRPYLTLGIVSWLILLALALTSFQAAQRKLGRRWQTLHNFIYLVAILAPIHYLWSVKILSPQPVLYALGAIVLLAWRYKKLRQWWRT.

5 helical membrane passes run I8 to Y28, L54 to I74, L79 to E99, P116 to F136, and F153 to S173.

Belongs to the MsrQ family. In terms of assembly, heterodimer of a catalytic subunit (MsrP) and a heme-binding subunit (MsrQ). FMN is required as a cofactor. The cofactor is heme b.

It localises to the cell inner membrane. Its function is as follows. Part of the MsrPQ system that repairs oxidized periplasmic proteins containing methionine sulfoxide residues (Met-O), using respiratory chain electrons. Thus protects these proteins from oxidative-stress damage caused by reactive species of oxygen and chlorine generated by the host defense mechanisms. MsrPQ is essential for the maintenance of envelope integrity under bleach stress, rescuing a wide series of structurally unrelated periplasmic proteins from methionine oxidation. MsrQ provides electrons for reduction to the reductase catalytic subunit MsrP, using the quinone pool of the respiratory chain. In Cronobacter sakazakii (strain ATCC BAA-894) (Enterobacter sakazakii), this protein is Protein-methionine-sulfoxide reductase heme-binding subunit MsrQ.